A 119-amino-acid polypeptide reads, in one-letter code: Ribonuclease P protein component (119 aa).

It belongs to the RnpA family. As to quaternary structure, consists of a catalytic RNA component (M1 or rnpB) and a protein subunit.

The enzyme catalyses Endonucleolytic cleavage of RNA, removing 5'-extranucleotides from tRNA precursor.. In terms of biological role, RNaseP catalyzes the removal of the 5'-leader sequence from pre-tRNA to produce the mature 5'-terminus. It can also cleave other RNA substrates such as 4.5S RNA. The protein component plays an auxiliary but essential role in vivo by binding to the 5'-leader sequence and broadening the substrate specificity of the ribozyme. In Citrobacter koseri (strain ATCC BAA-895 / CDC 4225-83 / SGSC4696), this protein is Ribonuclease P protein component.